The following is a 140-amino-acid chain: Peptidyl-prolyl cis-trans isomerase FKBP2 (140 aa).

An N-terminal signal peptide occupies residues Met-1–Ala-20. Positions Gly-47–Glu-135 constitute a PPIase FKBP-type domain.

Belongs to the FKBP-type PPIase family. FKBP2 subfamily. As to quaternary structure, interacts with ARFGEF1/BIG1 and the C-terminal of EPB41L2.

It localises to the endoplasmic reticulum membrane. It carries out the reaction [protein]-peptidylproline (omega=180) = [protein]-peptidylproline (omega=0). With respect to regulation, inhibited by both FK506 and rapamycin. Functionally, PPIases accelerate the folding of proteins. It catalyzes the cis-trans isomerization of proline imidic peptide bonds in oligopeptides. The sequence is that of Peptidyl-prolyl cis-trans isomerase FKBP2 (FKBP2) from Bos taurus (Bovine).